We begin with the raw amino-acid sequence, 369 residues long: Protein pxr-1 (369 aa).

The disordered stretch occupies residues 1–23 (MGLAAAKNKRKLGTDPNNTKWSR). The G-patch domain maps to 25–79 (ETTFGQKILRAQGWQPGEFLGAKDAAHAVHHTEASSSHIKVTLKDDNLGLGAKRN). Residues 147–338 (EEDGVPQSDT…GTSTPTVTSS (192 aa)) are disordered. Residues 153 to 167 (QSDTVDQQVETVPSQ) show a composition bias toward polar residues. Basic residues predominate over residues 218–227 (SKKKEKKDKK). Residues 228 to 237 (EKKDQKEKKD) are compositionally biased toward basic and acidic residues. Positions 267–292 (KSKKDKKKEKKEKKDKKKDKKEKKRK) are enriched in basic residues. Residues 304 to 318 (EDSKSKAQKRTKDGA) show a composition bias toward basic and acidic residues. The segment covering 322–338 (TSTPGGSGTSTPTVTSS) has biased composition (low complexity).

This sequence belongs to the PINX1 family.

Its subcellular location is the nucleus. It is found in the nucleolus. In terms of biological role, involved in rRNA-processing at A0, A1 and A2 sites and negatively regulates telomerase. In Neurospora crassa (strain ATCC 24698 / 74-OR23-1A / CBS 708.71 / DSM 1257 / FGSC 987), this protein is Protein pxr-1 (pxr-1).